Reading from the N-terminus, the 217-residue chain is Adenylate kinase (217 aa).

10-15 (GAGKGT) is an ATP binding site. The NMP stretch occupies residues 30-59 (STGDMLRAAVKAGTPLGLEAKKVMDSGGLV). Residues T31, R36, 57–59 (GLV), 85–88 (GFPR), and Q92 each bind AMP. An LID region spans residues 122 to 159 (GRRVHVASGRTYHVKFNPPKVAGVDDVTGEPLIQRDDD). ATP-binding positions include R123 and 132–133 (TY). Residues R156 and R167 each coordinate AMP. G203 provides a ligand contact to ATP.

The protein belongs to the adenylate kinase family. Monomer.

The protein resides in the cytoplasm. It carries out the reaction AMP + ATP = 2 ADP. The protein operates within purine metabolism; AMP biosynthesis via salvage pathway; AMP from ADP: step 1/1. Catalyzes the reversible transfer of the terminal phosphate group between ATP and AMP. Plays an important role in cellular energy homeostasis and in adenine nucleotide metabolism. This Methylibium petroleiphilum (strain ATCC BAA-1232 / LMG 22953 / PM1) protein is Adenylate kinase.